Here is a 298-residue protein sequence, read N- to C-terminus: 4-hydroxy-3-methylbut-2-enyl diphosphate reductase (298 aa).

Residue Cys-12 participates in [4Fe-4S] cluster binding. (2E)-4-hydroxy-3-methylbut-2-enyl diphosphate contacts are provided by His-40 and His-78. Positions 40 and 78 each coordinate dimethylallyl diphosphate. Residues His-40 and His-78 each coordinate isopentenyl diphosphate. Cys-100 provides a ligand contact to [4Fe-4S] cluster. Residue His-128 participates in (2E)-4-hydroxy-3-methylbut-2-enyl diphosphate binding. Residue His-128 participates in dimethylallyl diphosphate binding. An isopentenyl diphosphate-binding site is contributed by His-128. The Proton donor role is filled by Glu-130. Thr-171 contributes to the (2E)-4-hydroxy-3-methylbut-2-enyl diphosphate binding site. Cys-200 serves as a coordination point for [4Fe-4S] cluster. Ser-228, Ser-229, Asn-230, and Ser-270 together coordinate (2E)-4-hydroxy-3-methylbut-2-enyl diphosphate. Dimethylallyl diphosphate contacts are provided by Ser-228, Ser-229, Asn-230, and Ser-270. Residues Ser-228, Ser-229, Asn-230, and Ser-270 each coordinate isopentenyl diphosphate.

The protein belongs to the IspH family. [4Fe-4S] cluster is required as a cofactor.

It carries out the reaction isopentenyl diphosphate + 2 oxidized [2Fe-2S]-[ferredoxin] + H2O = (2E)-4-hydroxy-3-methylbut-2-enyl diphosphate + 2 reduced [2Fe-2S]-[ferredoxin] + 2 H(+). The catalysed reaction is dimethylallyl diphosphate + 2 oxidized [2Fe-2S]-[ferredoxin] + H2O = (2E)-4-hydroxy-3-methylbut-2-enyl diphosphate + 2 reduced [2Fe-2S]-[ferredoxin] + 2 H(+). It participates in isoprenoid biosynthesis; dimethylallyl diphosphate biosynthesis; dimethylallyl diphosphate from (2E)-4-hydroxy-3-methylbutenyl diphosphate: step 1/1. The protein operates within isoprenoid biosynthesis; isopentenyl diphosphate biosynthesis via DXP pathway; isopentenyl diphosphate from 1-deoxy-D-xylulose 5-phosphate: step 6/6. Its function is as follows. Catalyzes the conversion of 1-hydroxy-2-methyl-2-(E)-butenyl 4-diphosphate (HMBPP) into a mixture of isopentenyl diphosphate (IPP) and dimethylallyl diphosphate (DMAPP). Acts in the terminal step of the DOXP/MEP pathway for isoprenoid precursor biosynthesis. This Kosmotoga olearia (strain ATCC BAA-1733 / DSM 21960 / TBF 19.5.1) protein is 4-hydroxy-3-methylbut-2-enyl diphosphate reductase.